Consider the following 297-residue polypeptide: Adrenocorticotropic hormone receptor (297 aa).

Residues 1–23 (MKHIIHASGNVNGTARNNSDCPH) are Extracellular-facing. Residues asparagine 12 and asparagine 17 are each glycosylated (N-linked (GlcNAc...) asparagine). Disulfide bonds link cysteine 21–cysteine 253 and cysteine 245–cysteine 251. A helical transmembrane segment spans residues 24–49 (VALPEEIFFIISITGVLENLIIILAV). Residues 50-58 (IKNKNLQFP) lie on the Cytoplasmic side of the membrane. Residues 59–79 (MYFFICSLAISDMLGSLYKIL) traverse the membrane as a helical segment. The Extracellular segment spans residues 80-104 (ESILIMFRNMGYFKPHGSFETTTDD). The helical transmembrane segment at 105-126 (IIDTMFILSLLGSIFSLLAIAV) threads the bilayer. Residues 127–147 (DRYITIFHALQYHSIVTMHRT) lie on the Cytoplasmic side of the membrane. A helical transmembrane segment spans residues 148-168 (IAVLSIIWTFCIGSGITMVLF). The Extracellular segment spans residues 169–180 (SHHVPTVLTFTS). Residues 181–199 (LFPLMLVFILCLYVHMFLM) traverse the membrane as a helical segment. Residues 200–217 (ARSHARNISTLPRGNMRG) lie on the Cytoplasmic side of the membrane. The helical transmembrane segment at 218-244 (AITLTILLGVFIFCWAPFILHILLVTF) threads the bilayer. Topologically, residues 245 to 256 (CPNNPYCTCYIS) are extracellular. The helical transmembrane segment at 257–278 (LFHVNGMLIMCNAVIDPFIYAF) threads the bilayer. Topologically, residues 279-297 (RSPELRSAFRRMISYSKCL) are cytoplasmic. A lipid anchor (S-palmitoyl cysteine) is attached at cysteine 296.

This sequence belongs to the G-protein coupled receptor 1 family. Homodimer. Interacts with corticotropin (ACTH). Interacts with MRAP; this interaction targets MC2R to the plasma membrane. Interacts with MRAP2; competing with MRAP for binding to MC2R and impairing the binding of corticotropin (ACTH). In terms of processing, ubiquitinated by MGRN1 that may be involved in post-endocytic trafficking and/or degradation of internalized receptor.

The protein resides in the cell membrane. Hormone receptor primarily expressed in adrenal cortex that plays a key role in regulating adrenocortical function. Upon corticotropin (ACTH) binding, facilitates the release of adrenal glucocorticoids, including cortisol and corticosterone. In addition, MC2R is required for fetal and neonatal adrenal gland development. Mechanistically, activates adenylate cyclase (cAMP), the MAPK cascade as well as the cAMP-dependent protein kinase A pathway leading to steroidogenic factor 1/NR5A1-mediated transcriptional activation. The sequence is that of Adrenocorticotropic hormone receptor (MC2R) from Cavia porcellus (Guinea pig).